The primary structure comprises 176 residues: Protein GrpE (176 aa).

Residues 1-31 (MSEQKQEFENENAENSEHLQDENLQNIEDVE) are disordered.

It belongs to the GrpE family. In terms of assembly, homodimer.

It is found in the cytoplasm. Functionally, participates actively in the response to hyperosmotic and heat shock by preventing the aggregation of stress-denatured proteins, in association with DnaK and GrpE. It is the nucleotide exchange factor for DnaK and may function as a thermosensor. Unfolded proteins bind initially to DnaJ; upon interaction with the DnaJ-bound protein, DnaK hydrolyzes its bound ATP, resulting in the formation of a stable complex. GrpE releases ADP from DnaK; ATP binding to DnaK triggers the release of the substrate protein, thus completing the reaction cycle. Several rounds of ATP-dependent interactions between DnaJ, DnaK and GrpE are required for fully efficient folding. The protein is Protein GrpE of Campylobacter jejuni subsp. doylei (strain ATCC BAA-1458 / RM4099 / 269.97).